Here is a 122-residue protein sequence, read N- to C-terminus: Large ribosomal subunit protein uL14 (122 aa).

Belongs to the universal ribosomal protein uL14 family. Part of the 50S ribosomal subunit. Forms a cluster with proteins L3 and L19. In the 70S ribosome, L14 and L19 interact and together make contacts with the 16S rRNA in bridges B5 and B8.

Binds to 23S rRNA. Forms part of two intersubunit bridges in the 70S ribosome. This is Large ribosomal subunit protein uL14 from Chlamydia trachomatis serovar L2 (strain ATCC VR-902B / DSM 19102 / 434/Bu).